We begin with the raw amino-acid sequence, 497 residues long: DNA-dependent metalloprotease SPRTN (497 aa).

An N-acetylmethionine modification is found at Met-1. The SprT-like domain maps to Leu-46–Ile-213. His-112 contacts Zn(2+). Glu-113 is an active-site residue. Positions 116 and 131 each coordinate Zn(2+). The residue at position 231 (Lys-231) is an N6-acetyllysine. The short motif at Phe-254–Gly-262 is the SHP-box element. At Ser-269 the chain carries Phosphoserine. Lys-304 is covalently cross-linked (Glycyl lysine isopeptide (Lys-Gly) (interchain with G-Cter in SUMO2)). The PIP-box signature appears at Gln-326–Phe-333. Lys-342 participates in a covalent cross-link: Glycyl lysine isopeptide (Lys-Gly) (interchain with G-Cter in SUMO2); alternate. A Glycyl lysine isopeptide (Lys-Gly) (interchain with G-Cter in ubiquitin); alternate cross-link involves residue Lys-342. Positions Phe-344–Gln-459 are disordered. The segment covering Val-347 to Thr-356 has biased composition (polar residues). Residue Lys-362 forms a Glycyl lysine isopeptide (Lys-Gly) (interchain with G-Cter in SUMO2) linkage. Low complexity predominate over residues Thr-383–Ile-404. Ser-384 is modified (phosphoserine). The short motif at Asp-413–Asp-424 is the Nuclear localization signal element. Residues Pro-420–Lys-432 are compositionally biased toward basic and acidic residues. Lys-432 is covalently cross-linked (Glycyl lysine isopeptide (Lys-Gly) (interchain with G-Cter in SUMO2)). The span at Arg-442–Gln-459 shows a compositional bias: low complexity. A UBZ4-type zinc finger spans residues Leu-462–Lys-489. Zn(2+) is bound by residues Cys-465, Cys-468, His-480, and Cys-484.

Belongs to the Spartan family. Homodimer. Interacts (VIA PIP-box) with PCNA (when ubiquitinated). Interacts (via its SHP-box) with VCP/p97. Interacts with RAD18. Interacts with KCTD13 and POLD3. Requires Zn(2+) as cofactor. In terms of processing, autocatalytically cleaved in response to double-stranded DNA-binding: autocatalytic cleavage takes place in trans and leads to inactivation. Post-translationally, monoubiquitinated; monoubiquitination promotes exclusion from chromatin. Deubiquitinated by VCPIP1: deubiquitination is required for subsequent acetylation and recruitment to chromatin and DNA damage sites. Acetylated following deubiquitination by VCPIP1, leading to recruitment to chromatin and DNA damage sites. In terms of processing, phosphorylation by CHEK1 promotes recruitment to chromatin.

The protein resides in the nucleus. The protein localises to the chromosome. With respect to regulation, DNA-binding activates the protease activity: single-stranded DNA-binding specifically activates ability to cleave covalent DNA-protein cross-links (DPCs). In contrast, double-stranded DNA-binding specifically activates autocatalytic cleavage, and subsequent inactivation. DNA-dependent metalloendopeptidase that mediates the proteolytic cleavage of covalent DNA-protein cross-links (DPCs) during DNA synthesis, thereby playing a key role in maintaining genomic integrity. DPCs are highly toxic DNA lesions that interfere with essential chromatin transactions, such as replication and transcription, and which are induced by reactive agents, such as UV light or formaldehyde. Associates with the DNA replication machinery and specifically removes DPCs during DNA synthesis. Catalyzes proteolytic cleavage of the HMCES DNA-protein cross-link following unfolding by the BRIP1/FANCJ helicase. Acts as a pleiotropic protease for DNA-binding proteins cross-linked with DNA, such as TOP1, TOP2A, histones H3 and H4. Mediates degradation of DPCs that are not ubiquitinated, while it is not able to degrade ubiquitinated DPCs. SPRTN activation requires polymerase collision with DPCs followed by helicase bypass of DPCs. Involved in recruitment of VCP/p97 to sites of DNA damage. Also acts as an activator of CHEK1 during normal DNA replication by mediating proteolytic cleavage of CHEK1, thereby promoting CHEK1 removal from chromatin and subsequent activation. Does not activate CHEK1 in response to DNA damage. May also act as a 'reader' of ubiquitinated PCNA: recruited to sites of UV damage and interacts with ubiquitinated PCNA and RAD18, the E3 ubiquitin ligase that monoubiquitinates PCNA. Facilitates chromatin association of RAD18 and is required for efficient PCNA monoubiquitination, promoting a feed-forward loop to enhance PCNA ubiquitination and translesion DNA synthesis. The protein is DNA-dependent metalloprotease SPRTN of Mus musculus (Mouse).